A 431-amino-acid chain; its full sequence is Tryptophan--tRNA ligase (431 aa).

ATP-binding positions include 12-14 and 20-21; these read TPS and GN. Residues 13–21 carry the 'HIGH' region motif; the sequence is PSGTPHLGN. Asp145 contacts L-tryptophan. Residues 157–159, Leu197, and 204–208 each bind ATP; these read GRD and KMSKS. A 'KMSKS' region motif is present at residues 204-208; that stretch reads KMSKS.

The protein belongs to the class-I aminoacyl-tRNA synthetase family. Homodimer.

The protein localises to the cytoplasm. The catalysed reaction is tRNA(Trp) + L-tryptophan + ATP = L-tryptophyl-tRNA(Trp) + AMP + diphosphate + H(+). Its function is as follows. Catalyzes the attachment of tryptophan to tRNA(Trp). This chain is Tryptophan--tRNA ligase, found in Xanthomonas campestris pv. campestris (strain ATCC 33913 / DSM 3586 / NCPPB 528 / LMG 568 / P 25).